We begin with the raw amino-acid sequence, 913 residues long: Ubiquitin carboxyl-terminal hydrolase 20 (913 aa).

The UBP-type zinc finger occupies 6-111 (DLCPHLDSIG…GSSKFSEQDS (106 aa)). Zn(2+)-binding residues include C8, H10, C30, C33, C43, C48, C53, H60, H64, H70, C83, and C86. Residues S111, S131, and S133 each carry the phosphoserine modification. The USP domain maps to 144–684 (TGMKNLGNSC…EGYVLFYRKS (541 aa)). The active-site Nucleophile is C153. The tract at residues 256-414 (LTEARDSDSS…SSSPPRASPV (159 aa)) is disordered. Position 257 is a phosphothreonine (T257). The segment covering 258-278 (EARDSDSSDTDEKREGDRSPS) has biased composition (basic and acidic residues). S304 carries the phosphoserine modification. The span at 315 to 331 (EASRAISEKERMKDRKF) shows a compositional bias: basic and acidic residues. At S367 the chain carries Phosphoserine. T376 is subject to Phosphothreonine. A phosphoserine mark is found at S407 and S412. The active-site Proton acceptor is the H642. DUSP domains follow at residues 686–779 (EEAV…LYVC) and 788–891 (ALAK…RQSV).

The protein belongs to the peptidase C19 family. USP20/USP33 subfamily. In terms of assembly, interacts with VHL, leading to its ubiquitination and subsequent degradation. Interacts with CCP110. Interacts with DIO2. Interacts with HIF1A. Interacts with ADRB2. Interacts with USP18. Post-translationally, ubiquitinated via a VHL-dependent pathway for proteasomal degradation.

The protein resides in the cytoplasm. It localises to the endoplasmic reticulum. Its subcellular location is the perinuclear region. It is found in the cytoskeleton. The protein localises to the microtubule organizing center. The protein resides in the centrosome. The catalysed reaction is Thiol-dependent hydrolysis of ester, thioester, amide, peptide and isopeptide bonds formed by the C-terminal Gly of ubiquitin (a 76-residue protein attached to proteins as an intracellular targeting signal).. Functionally, deubiquitinating enzyme that plays a role in many cellular processes including autophagy, cellular antiviral response or membrane protein biogenesis. Attenuates TLR4-mediated NF-kappa-B signaling by cooperating with beta-arrestin-2/ARRB2 and inhibiting TRAF6 autoubiquitination. Promotes cellular antiviral responses by deconjugating 'Lys-33' and 'Lys-48'-linked ubiquitination of STING1 leading to its stabilization. Plays an essential role in autophagy induction by regulating the ULK1 stability through deubiquitination of ULK1. Acts as a positive regulator for NF-kappa-B activation by TNF-alpha through deubiquitinating 'Lys-48'-linked polyubiquitination of SQSTM1, leading to its increased stability. Acts as a regulator of G-protein coupled receptor (GPCR) signaling by mediating the deubiquitination beta-2 adrenergic receptor (ADRB2). Plays a central role in ADRB2 recycling and resensitization after prolonged agonist stimulation by constitutively binding ADRB2, mediating deubiquitination of ADRB2 and inhibiting lysosomal trafficking of ADRB2. Upon dissociation, it is probably transferred to the translocated beta-arrestins, possibly leading to beta-arrestins deubiquitination and disengagement from ADRB2. This suggests the existence of a dynamic exchange between the ADRB2 and beta-arrestins. Deubiquitinates DIO2, thereby regulating thyroid hormone regulation. Deubiquitinates HIF1A, leading to stabilize HIF1A and enhance HIF1A-mediated activity. Deubiquitinates MCL1, a pivotal member of the anti-apoptotic Bcl-2 protein family to regulate its stability. Within the endoplasmic reticulum, participates with USP33 in the rescue of post-translationally targeted membrane proteins that are inappropriately ubiquitinated by the cytosolic protein quality control in the cytosol. The protein is Ubiquitin carboxyl-terminal hydrolase 20 (USP20) of Pongo abelii (Sumatran orangutan).